The following is a 163-amino-acid chain: MPASVLPLIEAAAHWPERGALVGLDLGTKTIGVAVSDPDRRLATGVETLQRKTFTADAARLLAIAGERNAAGFVLGLPINMDGSEGPRAQSTRAFARNLARLTDLAIGLWDERLSTVAVERELIGMDMSRAKRAKVIDEHAAIFILQGALDRLAVLRRTSKAN.

This sequence belongs to the YqgF nuclease family.

The protein resides in the cytoplasm. Could be a nuclease involved in processing of the 5'-end of pre-16S rRNA. The chain is Putative pre-16S rRNA nuclease from Nitrobacter hamburgensis (strain DSM 10229 / NCIMB 13809 / X14).